A 196-amino-acid chain; its full sequence is Cytochrome c biogenesis ATP-binding export protein CcmA (196 aa).

The ABC transporter domain occupies 2–195 (LSFHQLKFNI…HIKSAQILQL (194 aa)). Residue 34 to 41 (GANGCGKT) coordinates ATP.

The protein belongs to the ABC transporter superfamily. CcmA exporter (TC 3.A.1.107) family. As to quaternary structure, the complex is composed of two ATP-binding proteins (CcmA) and two transmembrane proteins (CcmB).

It localises to the cell inner membrane. It catalyses the reaction heme b(in) + ATP + H2O = heme b(out) + ADP + phosphate + H(+). Functionally, part of the ABC transporter complex CcmAB involved in the biogenesis of c-type cytochromes; once thought to export heme, this seems not to be the case, but its exact role is uncertain. Responsible for energy coupling to the transport system. In Rickettsia bellii (strain RML369-C), this protein is Cytochrome c biogenesis ATP-binding export protein CcmA.